We begin with the raw amino-acid sequence, 88 residues long: MVKLRLKRCGRKQRAIYRIVAIDVRSRREGRDLRKVGFYDPINNQTYLNVPLILYFLEKGAQPTGTVYDILKKAEVFKELQINQKKSN.

Belongs to the bacterial ribosomal protein bS16 family.

The protein localises to the plastid. It is found in the chloroplast. The chain is Small ribosomal subunit protein bS16c from Calycanthus floridus var. glaucus (Eastern sweetshrub).